The sequence spans 289 residues: Phosphatidylglycerol--prolipoprotein diacylglyceryl transferase (289 aa).

A run of 3 helical transmembrane segments spans residues 24 to 44, 70 to 90, and 111 to 131; these read GIAI…VYLL, GGVL…DWFL, and GING…LWLF. R158 contributes to the a 1,2-diacyl-sn-glycero-3-phospho-(1'-sn-glycerol) binding site. The next 2 membrane-spanning stretches (helical) occupy residues 219-239 and 253-273; these read GYLS…IEFF and FSMG…ILVW.

This sequence belongs to the Lgt family.

Its subcellular location is the cell inner membrane. It catalyses the reaction L-cysteinyl-[prolipoprotein] + a 1,2-diacyl-sn-glycero-3-phospho-(1'-sn-glycerol) = an S-1,2-diacyl-sn-glyceryl-L-cysteinyl-[prolipoprotein] + sn-glycerol 1-phosphate + H(+). It participates in protein modification; lipoprotein biosynthesis (diacylglyceryl transfer). Functionally, catalyzes the transfer of the diacylglyceryl group from phosphatidylglycerol to the sulfhydryl group of the N-terminal cysteine of a prolipoprotein, the first step in the formation of mature lipoproteins. The sequence is that of Phosphatidylglycerol--prolipoprotein diacylglyceryl transferase from Chlorobaculum tepidum (strain ATCC 49652 / DSM 12025 / NBRC 103806 / TLS) (Chlorobium tepidum).